The following is a 267-amino-acid chain: Glutamate 5-kinase (267 aa).

ATP is bound at residue K18. The substrate site is built by S58, D145, and N157. Residues 177–178 (SD) and 219–225 (TGGMATK) contribute to the ATP site.

It belongs to the glutamate 5-kinase family.

It is found in the cytoplasm. It catalyses the reaction L-glutamate + ATP = L-glutamyl 5-phosphate + ADP. It participates in amino-acid biosynthesis; L-proline biosynthesis; L-glutamate 5-semialdehyde from L-glutamate: step 1/2. Its function is as follows. Catalyzes the transfer of a phosphate group to glutamate to form L-glutamate 5-phosphate. In Clostridium tetani (strain Massachusetts / E88), this protein is Glutamate 5-kinase.